A 552-amino-acid chain; its full sequence is Tyrosine-protein kinase Src64B (552 aa).

Residues 95–156 form the SH3 domain; it reads VLKRVVVALY…PLNFVAEERS (62 aa). The SH2 domain maps to 162–259; it reads WFFENVLRKE…GLCHILSRPC (98 aa). In terms of domain architecture, Protein kinase spans 284 to 537; the sequence is IQLLRKLGRG…TFEFLNHYFE (254 aa). ATP contacts are provided by residues 290–298 and lysine 312; that span reads LGRGNFGEV. Residue aspartate 404 is the Proton acceptor of the active site. Tyrosine 434 carries the phosphotyrosine; by autocatalysis modification.

This sequence belongs to the protein kinase superfamily. Tyr protein kinase family. SRC subfamily. In terms of assembly, interacts with hzg. Post-translationally, phosphorylated. After the first 8 hours of development, accumulates almost exclusively in neural tissues such as the brain, ventral nerve chord, and eye-antennal disks, and in differentiating smooth muscle.

The enzyme catalyses L-tyrosyl-[protein] + ATP = O-phospho-L-tyrosyl-[protein] + ADP + H(+). Its function is as follows. Tyrosine-protein kinase that may play a role in the development of neural tissue and smooth muscle. May contribute to tyrosine phosphorylation of Dscam1, a cell surface receptor involved in targeting of growing axons during eye morphogenesis. The polypeptide is Tyrosine-protein kinase Src64B (Src64B) (Drosophila melanogaster (Fruit fly)).